Reading from the N-terminus, the 549-residue chain is Elongator complex protein 3 (549 aa).

A Radical SAM core domain is found at 84 to 374 (RTASGIAVVA…YRVQRDIPMP (291 aa)). [4Fe-4S] cluster-binding residues include C101, C111, and C114. Acetyl-CoA-binding positions include K166, 476 to 479 (ELHV), 499 to 501 (FGM), and Y532. The 152-residue stretch at 398–549 (TECRDVRTRE…EGPYMVKKLD (152 aa)) folds into the N-acetyltransferase domain.

This sequence belongs to the ELP3 family. As to quaternary structure, component of the elongator complex. Interacts with transcriptional repressors snai1 and snai2; interaction with snai1 inhibits its ubiquitination and stabilizes it. Requires [4Fe-4S] cluster as cofactor.

The protein localises to the cytoplasm. It is found in the nucleus. The catalysed reaction is uridine(34) in tRNA + acetyl-CoA + S-adenosyl-L-methionine + H2O = 5-(carboxymethyl)uridine(34) in tRNA + 5'-deoxyadenosine + L-methionine + CoA + 2 H(+). It participates in tRNA modification; 5-methoxycarbonylmethyl-2-thiouridine-tRNA biosynthesis. In terms of biological role, catalytic tRNA acetyltransferase subunit of the elongator complex which is required for multiple tRNA modifications, including mcm5U (5-methoxycarbonylmethyl uridine), mcm5s2U (5-methoxycarbonylmethyl-2-thiouridine), and ncm5U (5-carbamoylmethyl uridine). In the elongator complex, acts as a tRNA uridine(34) acetyltransferase by mediating formation of carboxymethyluridine in the wobble base at position 34 in tRNAs. Stabilizes transcriptional repressor snai1 by inhibiting its ubiquitination which promotes neural crest cell migration. This chain is Elongator complex protein 3, found in Xenopus tropicalis (Western clawed frog).